The sequence spans 725 residues: N-alpha-acetyltransferase 35, NatC auxiliary subunit (725 aa).

Position 187 is a phosphoserine (Ser187). The disordered stretch occupies residues 548-573 (ERIMEEQQKGRSSKKTKKKKKVRPLS). The segment covering 558-571 (RSSKKTKKKKKVRP) has biased composition (basic residues).

Belongs to the MAK10 family. In terms of assembly, component of the N-terminal acetyltransferase C (NatC) complex, which is composed of NAA35, NAA38 and NAA30.

It is found in the cytoplasm. In terms of biological role, auxillary component of the N-terminal acetyltransferase C (NatC) complex which catalyzes acetylation of N-terminal methionine residues. N-terminal acetylation protects proteins from ubiquitination and degradation by the N-end rule pathway. Involved in regulation of apoptosis and proliferation of smooth muscle cells. This is N-alpha-acetyltransferase 35, NatC auxiliary subunit (NAA35) from Homo sapiens (Human).